We begin with the raw amino-acid sequence, 45 residues long: U1-ctenitoxin-Pk1a (45 aa).

4 disulfides stabilise this stretch: Cys-3/Cys-16, Cys-10/Cys-25, Cys-15/Cys-34, and Cys-27/Cys-32.

In terms of tissue distribution, expressed by the venom gland.

It is found in the secreted. Its function is as follows. Neurotoxin. Causes rapid general flaccid paralysis and death in mice at dose levels of 5 ug per mouse. This chain is U1-ctenitoxin-Pk1a, found in Phoneutria keyserlingi (Brazilian wandering spider).